Here is an 89-residue protein sequence, read N- to C-terminus: Mitochondrial import inner membrane translocase subunit Tim9 (89 aa).

Residue alanine 2 is modified to N-acetylalanine. The Twin CX3C motif motif lies at 28–52 (CFLDCVKDFTTREVKPEETTCSEHC). 2 disulfide bridges follow: cysteine 28-cysteine 52 and cysteine 32-cysteine 48.

Belongs to the small Tim family. In terms of assembly, heterohexamer; composed of 3 copies of TIMM9 and 3 copies of TIMM10/TIM10A, named soluble 70 kDa complex. The complex forms a 6-bladed alpha-propeller structure and associates with the TIMM22 component of the TIM22 complex. Interacts with multi-pass transmembrane proteins in transit. Also forms a complex composed of TIMM9, TIMM10/TIM10A and FXC1/TIM10B. As to expression, ubiquitous, with highest expression in heart, kidney, liver and skeletal muscle.

Its subcellular location is the mitochondrion inner membrane. Its function is as follows. Mitochondrial intermembrane chaperone that participates in the import and insertion of multi-pass transmembrane proteins into the mitochondrial inner membrane. May also be required for the transfer of beta-barrel precursors from the TOM complex to the sorting and assembly machinery (SAM complex) of the outer membrane. Acts as a chaperone-like protein that protects the hydrophobic precursors from aggregation and guide them through the mitochondrial intermembrane space. This Homo sapiens (Human) protein is Mitochondrial import inner membrane translocase subunit Tim9 (TIMM9).